The following is a 263-amino-acid chain: Tryptophan 2,3-dioxygenase (263 aa).

Substrate is bound by residues 32 to 36 (FIVIH), Tyr-94, and Arg-98. Residue His-221 participates in heme binding. Position 235 (Thr-235) interacts with substrate.

Belongs to the tryptophan 2,3-dioxygenase family. In terms of assembly, homotetramer. It depends on heme as a cofactor.

The enzyme catalyses L-tryptophan + O2 = N-formyl-L-kynurenine. It participates in amino-acid degradation; L-tryptophan degradation via kynurenine pathway; L-kynurenine from L-tryptophan: step 1/2. Its function is as follows. Heme-dependent dioxygenase that catalyzes the oxidative cleavage of the L-tryptophan (L-Trp) pyrrole ring and converts L-tryptophan to N-formyl-L-kynurenine. Catalyzes the oxidative cleavage of the indole moiety. The polypeptide is Tryptophan 2,3-dioxygenase (Caulobacter vibrioides (strain ATCC 19089 / CIP 103742 / CB 15) (Caulobacter crescentus)).